The chain runs to 369 residues: Maltose/maltodextrin import ATP-binding protein MalK (369 aa).

The ABC transporter domain occupies 4-234 (VQLRNVTKAW…PADRFVAGFI (231 aa)). 36–43 (GPSGCGKS) is an ATP binding site.

The protein belongs to the ABC transporter superfamily. Maltooligosaccharide importer (TC 3.A.1.1.1) family. As to quaternary structure, the complex is composed of two ATP-binding proteins (MalK), two transmembrane proteins (MalG and MalK) and a solute-binding protein (MalE).

It is found in the cell inner membrane. It carries out the reaction D-maltose(out) + ATP + H2O = D-maltose(in) + ADP + phosphate + H(+). Its function is as follows. Part of the ABC transporter complex MalEFGK involved in maltose/maltodextrin import. Responsible for energy coupling to the transport system. This chain is Maltose/maltodextrin import ATP-binding protein MalK, found in Salmonella typhi.